We begin with the raw amino-acid sequence, 410 residues long: Sensor histidine kinase GlnK (410 aa).

Topologically, residues 1–15 (MLITVPLAGELKFYP) are extracellular. A helical membrane pass occupies residues 16 to 36 (LNEEFRVSFGAPVFFFFLSLL). Over 37–38 (RH) the chain is Cytoplasmic. A helical membrane pass occupies residues 39–59 (VPAVLPGFLTGAAVFIFRVFL). Over 60–71 (ELWGGGHNGLTP) the chain is Extracellular. A helical membrane pass occupies residues 72-92 (ILYDQASGFFFYMTYACLFSI). Topologically, residues 93-102 (LKANRFRERP) are cytoplasmic. The helical transmembrane segment at 103 to 123 (IMLGFIGFMIEVVSDCVELTV) threads the bilayer. Topologically, residues 124-139 (QFLIFHTVVTPEKITD) are extracellular. The helical transmembrane segment at 140 to 160 (IAVIAISHTFIVMSFYSVLKL) threads the bilayer. Topologically, residues 161 to 410 (YETQSREKQT…LPVRHLIQKG (250 aa)) are cytoplasmic. A Histidine kinase domain is found at 189 to 405 (VHLKKTLKTT…VFAIRLPVRH (217 aa)). Position 190 is a phosphohistidine; by autocatalysis (His-190).

As to quaternary structure, homotrimer. Under poor nitrogen source such as nitrate, the complex between GlnK and AmtB, which are the transmembrane ammonium transporter and its cognate regulator, respectively, interacts with TnrA. GlnK-ATP complex are not able to bind TnrA.

The protein localises to the cell membrane. It catalyses the reaction ATP + protein L-histidine = ADP + protein N-phospho-L-histidine.. Member of the two-component regulatory system GlnK/GlnL that positively regulates the expression of the glsA-glnT operon in response to glutamine. It seems that autophosphorylated GlnK transfers a phosphoryl group to GlnL, which positively regulates the expression of the glsA-glnT operon. Interaction between GlnK-AmtB complex and TnrA protects TnrA from proteolytic degradation. The sequence is that of Sensor histidine kinase GlnK from Bacillus subtilis (strain 168).